The sequence spans 340 residues: MGSTGKIKIGINGFGRIGRLVARVALTRDDIELVGVNDPFISTDYMSYMFKYDSVHGKWKHHEVNVKDSKTLLFGEKSVAVFGCRNPEEIPWGEVGAEYVVESTGVFTDKEKASAHLKAGAKKVVISAPSKDAPMFVVGVNEHQYKSDVNIVSNASCTTNCLAPLAKVINDKFGIVEGLMTTVHSITATQKTVDGPSNKDWRGGRGAGFNIIPSSTGAAKAVGKVLPALNGKLTGMAFRVPTPDVSVVDLTVRLEKSATYDEIKAAIKAESEGNLKGILGYTEDAVVSTDFIGDSRSSIFDAQAGIALSDNFVKLVSWYDNEWGYSSRVVDLIVHMAATQ.

Residues 16–17 (RI), Asp38, and Arg85 contribute to the NAD(+) site. D-glyceraldehyde 3-phosphate-binding positions include 156–158 (SCT), Thr187, 216–217 (TG), and Arg239. Cys157 serves as the catalytic Nucleophile. Asn321 is an NAD(+) binding site.

It belongs to the glyceraldehyde-3-phosphate dehydrogenase family. In terms of assembly, homotetramer.

Its subcellular location is the cytoplasm. It carries out the reaction D-glyceraldehyde 3-phosphate + phosphate + NAD(+) = (2R)-3-phospho-glyceroyl phosphate + NADH + H(+). It participates in carbohydrate degradation; glycolysis; pyruvate from D-glyceraldehyde 3-phosphate: step 1/5. Key enzyme in glycolysis that catalyzes the first step of the pathway by converting D-glyceraldehyde 3-phosphate (G3P) into 3-phospho-D-glyceroyl phosphate. Essential for the maintenance of cellular ATP levels and carbohydrate metabolism. The sequence is that of Glyceraldehyde-3-phosphate dehydrogenase, cytosolic (GAPC) from Pinus sylvestris (Scotch pine).